The following is an 829-amino-acid chain: Probable beta-glucosidase H (829 aa).

A glycan (N-linked (GlcNAc...) asparagine) is linked at N13. D225 is an active-site residue. N-linked (GlcNAc...) asparagine glycosylation is found at N304, N473, N602, N627, N664, and N749. One can recognise a PA14 domain in the interval 389 to 548 (RMLSNAVIHF…DPEQMVANAV (160 aa)).

This sequence belongs to the glycosyl hydrolase 3 family.

The protein localises to the secreted. It catalyses the reaction Hydrolysis of terminal, non-reducing beta-D-glucosyl residues with release of beta-D-glucose.. The protein operates within glycan metabolism; cellulose degradation. In terms of biological role, beta-glucosidases are one of a number of cellulolytic enzymes involved in the degradation of cellulosic biomass. Catalyzes the last step releasing glucose from the inhibitory cellobiose. The chain is Probable beta-glucosidase H (bglH) from Aspergillus fumigatus (strain CBS 144.89 / FGSC A1163 / CEA10) (Neosartorya fumigata).